The following is a 227-amino-acid chain: Uracil-DNA glycosylase 2 (227 aa).

Catalysis depends on Asp-67, which acts as the Proton acceptor.

It belongs to the uracil-DNA glycosylase (UDG) superfamily. UNG family.

Its subcellular location is the cytoplasm. It carries out the reaction Hydrolyzes single-stranded DNA or mismatched double-stranded DNA and polynucleotides, releasing free uracil.. Functionally, excises uracil residues from the DNA which can arise as a result of misincorporation of dUMP residues by DNA polymerase or due to deamination of cytosine. This is Uracil-DNA glycosylase 2 (ung2) from Streptomyces coelicolor (strain ATCC BAA-471 / A3(2) / M145).